Reading from the N-terminus, the 442-residue chain is D(2) dopamine receptor A (442 aa).

The Extracellular segment spans residues 1–31 (MDPQNLSMYNDDINNGTNGTAVDQKPHYNYY). Residues Asn-5, Asn-15, and Asn-18 are each glycosylated (N-linked (GlcNAc...) asparagine). Residues 32–54 (AMLLTLLVFVIVFGNVLVCIAVS) traverse the membrane as a helical segment. The Cytoplasmic segment spans residues 55–64 (REKALQTTTN). Residues 65–87 (YLIVSLAVADLLVATLVMPWAVY) traverse the membrane as a helical segment. Residues 88 to 102 (MEVVGEWRFSRIHCD) are Extracellular-facing. Cys-101 and Cys-176 are disulfide-bonded. Residues 103 to 124 (IFVTLDVMMCTASILNLCAISI) traverse the membrane as a helical segment. Over 125–145 (DRYTAVAMPMLYNTRYSSKRR) the chain is Cytoplasmic. The helical transmembrane segment at 146–166 (VTVMISVVWVLSFAISCPLLF) threads the bilayer. Topologically, residues 167-182 (GLNNTGSKVCIIDNPA) are extracellular. A helical transmembrane segment spans residues 183–207 (FVIYSSIVSFYVPFIVTLLVYVQIY). The Cytoplasmic segment spans residues 208–372 (IVLRKRRKRV…SQHKEKKATQ (165 aa)). Residues 273-335 (DMEMEMMSST…KNGHPKDSTK (63 aa)) are disordered. A compositionally biased stretch (polar residues) spans 304–318 (ATSNQCKNASLTSPV). Residues 322–335 (YKAEKNGHPKDSTK) show a composition bias toward basic and acidic residues. The helical transmembrane segment at 373 to 394 (MLAIVLGVFIICWLPFFIIHIL) threads the bilayer. Over 395-408 (NMHCNCNIPQALYS) the chain is Extracellular. Residues Cys-398 and Cys-400 are joined by a disulfide bond. A helical transmembrane segment spans residues 409–430 (AFTWLGYVNSAVNPIIYTTFNV). The Cytoplasmic portion of the chain corresponds to 431 to 442 (EFRKAFIKILHC). Residue Cys-442 is the site of S-palmitoyl cysteine attachment.

The protein belongs to the G-protein coupled receptor 1 family. Palmitoylated. Palmitoylation is probably required for proper localization to the plasma membrane and stability of the receptor. Brain; pituitary.

The protein localises to the cell membrane. Its subcellular location is the golgi apparatus membrane. This is one of the five types (D1 to D5) of receptors for dopamine. The activity of this receptor is mediated by G proteins which inhibits adenylyl cyclase. In Xenopus D2R is involved in the regulation of the melanotrope cells of the intermediate pituitary during background adaptation of the animal. This chain is D(2) dopamine receptor A (drd2-a), found in Xenopus laevis (African clawed frog).